Reading from the N-terminus, the 859-residue chain is Linoleate 9S-lipoxygenase B (859 aa).

One can recognise a PLAT domain in the interval 34–158; sequence INIGASVVDG…RYKSDRIFFA (125 aa). The region spanning 161–859 is the Lipoxygenase domain; that stretch reads AYLPSETPQP…GKGIPNSVSI (699 aa). The segment at 213–246 is disordered; that stretch reads EYARPILGGSSEYPYPRRGRTGREPTKADPNCES. Over residues 233-244 the composition is skewed to basic and acidic residues; the sequence is TGREPTKADPNC. Positions 521, 526, 711, and 859 each coordinate Fe cation.

This sequence belongs to the lipoxygenase family. In terms of assembly, monomer. Fe cation is required as a cofactor. In terms of tissue distribution, fruit specific.

The protein localises to the cytoplasm. It carries out the reaction (9Z,12Z)-octadecadienoate + O2 = (9S)-hydroperoxy-(10E,12Z)-octadecadienoate. Its pathway is lipid metabolism; oxylipin biosynthesis. Its function is as follows. Plant lipoxygenase may be involved in a number of diverse aspects of plant physiology including growth and development, pest resistance, and senescence or responses to wounding. It catalyzes the hydroperoxidation of lipids containing a cis,cis-1,4-pentadiene structure. This is Linoleate 9S-lipoxygenase B (LOX1.2) from Solanum lycopersicum (Tomato).